Consider the following 451-residue polypeptide: uncharacterized protein (451 aa).

The N-terminal stretch at 1-22 is a signal peptide; sequence MKLKLIFSLFLVLVFCSLFVFG. N-linked (GlcNAc...) asparagine glycosylation is found at Asn25, Asn45, Asn209, Asn326, and Asn402.

It localises to the secreted. This is an uncharacterized protein from Dictyostelium discoideum (Social amoeba).